A 151-amino-acid polypeptide reads, in one-letter code: Aspartate carbamoyltransferase regulatory chain (151 aa).

The Zn(2+) site is built by cysteine 107, cysteine 112, cysteine 135, and cysteine 138.

It belongs to the PyrI family. In terms of assembly, contains catalytic and regulatory chains. It depends on Zn(2+) as a cofactor.

Its function is as follows. Involved in allosteric regulation of aspartate carbamoyltransferase. This is Aspartate carbamoyltransferase regulatory chain from Thermococcus onnurineus (strain NA1).